The chain runs to 297 residues: Formiminotransferase cyclodeaminase-like protein (297 aa).

The interval 2–196 (LREMLGCCKV…GVVAVGACGW (195 aa)) is formiminotransferase N-subdomain. H89 functions as the For formimidoyltransferase activity in the catalytic mechanism. 178-187 (GPQEVSKAKG) is a binding site for folate.

It belongs to the formiminotransferase family. Expressed constitutively in roots, stems, leaves and flowers.

It is found in the golgi apparatus. The protein resides in the trans-Golgi network. The enzyme catalyses (6S)-5-formyl-5,6,7,8-tetrahydrofolate + L-glutamate = N-formyl-L-glutamate + (6S)-5,6,7,8-tetrahydrofolate + H(+). It carries out the reaction 5-formimidoyltetrahydrofolate + L-glutamate = N-formimidoyl-L-glutamate + (6S)-5,6,7,8-tetrahydrofolate. It participates in one-carbon metabolism; tetrahydrofolate interconversion. Functionally, involved in the regulation of root growth. May regulate sorting and/or transportation of trans-Golgi network (TGN) vesicles in root cap peripheral cells, thus influencing the extracellular secretion of mucilage components in the root cap. In Arabidopsis thaliana (Mouse-ear cress), this protein is Formiminotransferase cyclodeaminase-like protein.